A 451-amino-acid chain; its full sequence is Ribonuclease J (451 aa).

Residues His-84, His-86, Asp-88, His-89, His-155, and Asp-177 each contribute to the Zn(2+) site. 384-388 (HVSGH) provides a ligand contact to substrate. His-410 is a binding site for Zn(2+).

The protein belongs to the metallo-beta-lactamase superfamily. RNA-metabolizing metallo-beta-lactamase-like family. Archaeal RNase J subfamily. As to quaternary structure, homodimer. The cofactor is Zn(2+).

It localises to the cytoplasm. Inhibited by 1,10-phenanthroline. Its function is as follows. A highly processive 5'-3' exoribonuclease; no evidence has been seen for endonuclease activity. Prefers 5'-phosphate or 5'-hydroxyl ends; 5'-triphosphate substrates are very poorly degraded, does not degrade circular RNA. Does not degrade pre-tRNA(Trp) suggesting it is inhibited by strong secondary structures. Also degrades ssNDA but not dsDNA. The sequence is that of Ribonuclease J from Pyrococcus abyssi (strain GE5 / Orsay).